We begin with the raw amino-acid sequence, 330 residues long: Ferredoxin--NADP reductase (330 aa).

Residues T18, E37, Q45, Y50, V90, F124, D286, and T327 each contribute to the FAD site.

Belongs to the ferredoxin--NADP reductase type 2 family. As to quaternary structure, homodimer. FAD is required as a cofactor.

It carries out the reaction 2 reduced [2Fe-2S]-[ferredoxin] + NADP(+) + H(+) = 2 oxidized [2Fe-2S]-[ferredoxin] + NADPH. This chain is Ferredoxin--NADP reductase, found in Halalkalibacterium halodurans (strain ATCC BAA-125 / DSM 18197 / FERM 7344 / JCM 9153 / C-125) (Bacillus halodurans).